Consider the following 147-residue polypeptide: UPF0735 ACT domain-containing protein BPUM_2431 (147 aa).

The 76-residue stretch at 70 to 145 folds into the ACT domain; that stretch reads TLFFHLEDRS…FVEKVEILGS (76 aa).

The protein belongs to the UPF0735 family.

The chain is UPF0735 ACT domain-containing protein BPUM_2431 from Bacillus pumilus (strain SAFR-032).